The following is a 120-amino-acid chain: Spermidine export protein MdtJ (120 aa).

4 helical membrane-spanning segments follow: residues 1–21 (MFYW…TLSM), 31–51 (TGFI…SFAV), 54–74 (IALG…ITLF), and 81–101 (EALS…IALI).

This sequence belongs to the drug/metabolite transporter (DMT) superfamily. Small multidrug resistance (SMR) (TC 2.A.7.1) family. MdtJ subfamily. As to quaternary structure, forms a complex with MdtI.

Its subcellular location is the cell inner membrane. Catalyzes the excretion of spermidine. The chain is Spermidine export protein MdtJ from Citrobacter koseri (strain ATCC BAA-895 / CDC 4225-83 / SGSC4696).